The chain runs to 421 residues: Serine hydroxymethyltransferase (421 aa).

Residues Leu-121 and 125–127 (GHL) each bind (6S)-5,6,7,8-tetrahydrofolate. Lys-229 is subject to N6-(pyridoxal phosphate)lysine.

This sequence belongs to the SHMT family. As to quaternary structure, homodimer. The cofactor is pyridoxal 5'-phosphate.

Its subcellular location is the cytoplasm. It catalyses the reaction (6R)-5,10-methylene-5,6,7,8-tetrahydrofolate + glycine + H2O = (6S)-5,6,7,8-tetrahydrofolate + L-serine. It participates in one-carbon metabolism; tetrahydrofolate interconversion. It functions in the pathway amino-acid biosynthesis; glycine biosynthesis; glycine from L-serine: step 1/1. Catalyzes the reversible interconversion of serine and glycine with tetrahydrofolate (THF) serving as the one-carbon carrier. This reaction serves as the major source of one-carbon groups required for the biosynthesis of purines, thymidylate, methionine, and other important biomolecules. Also exhibits THF-independent aldolase activity toward beta-hydroxyamino acids, producing glycine and aldehydes, via a retro-aldol mechanism. This chain is Serine hydroxymethyltransferase, found in Actinobacillus pleuropneumoniae serotype 5b (strain L20).